Consider the following 551-residue polypeptide: Thermolysin (551 aa).

Positions 1–31 are cleaved as a signal peptide; that stretch reads MKRKMKMKLVRFGLAAGLAAQVFFLPYNALA. A propeptide spans 32-235 (activation peptide); the sequence is STEHVTWNQQ…DAAKPGDVKS (204 aa). Positions 292, 294, 296, and 373 each coordinate Ca(2+). Histidine 377 contacts Zn(2+). Residue glutamate 378 is part of the active site. 2 residues coordinate Zn(2+): histidine 381 and glutamate 401. Residues glutamate 412, asparagine 418, aspartate 420, glutamate 422, glutamate 425, threonine 429, isoleucine 432, and aspartate 435 each coordinate Ca(2+). The Proton donor role is filled by histidine 466.

This sequence belongs to the peptidase M4 family. Ca(2+) is required as a cofactor. It depends on Zn(2+) as a cofactor.

Its subcellular location is the secreted. It catalyses the reaction Preferential cleavage: Xaa-|-Leu &gt; Xaa-|-Phe.. Extracellular zinc metalloprotease. The sequence is that of Thermolysin (nprS) from Geobacillus stearothermophilus (Bacillus stearothermophilus).